The sequence spans 452 residues: Bifunctional F420 biosynthesis protein FbiB (452 aa).

A coenzyme F420:L-glutamate ligase region spans residues 1-248 (MVSAPGDHAG…AGEEDLFWLG (248 aa)). GTP contacts are provided by residues 24-27 (LPEF), Ser-54, and Lys-59. A divalent metal cation is bound at residue Asp-113. Residue Asn-116 coordinates GTP. Residues Asp-154 and Thr-155 each contribute to the a divalent metal cation site. The segment at 249–452 (TAEAVERGRR…RDPGDGLVER (204 aa)) is dehydro-coenzyme F420-0 reductase. FMN-binding positions include 264 to 268 (RRSVR) and Ala-292. Asp-324 is a coenzyme F420-(gamma-Glu)n binding site. 2 residues coordinate FMN: Gly-403 and Arg-440.

It in the N-terminal section; belongs to the CofE family. It depends on Mg(2+) as a cofactor. Mn(2+) is required as a cofactor. K(+) serves as cofactor.

The enzyme catalyses oxidized coenzyme F420-0 + GTP + L-glutamate = oxidized coenzyme F420-1 + GDP + phosphate + H(+). The catalysed reaction is oxidized coenzyme F420-0 + FMN + H(+) = dehydro coenzyme F420-0 + FMNH2. It carries out the reaction oxidized coenzyme F420-1 + GTP + L-glutamate = oxidized coenzyme F420-2 + GDP + phosphate + H(+). The protein operates within cofactor biosynthesis; coenzyme F420 biosynthesis. In terms of biological role, bifunctional enzyme that catalyzes the GTP-dependent successive addition of two or more gamma-linked L-glutamates to the L-lactyl phosphodiester of 7,8-didemethyl-8-hydroxy-5-deazariboflavin (F420-0) to form polyglutamated F420 derivatives, and the FMNH2-dependent reduction of dehydro-F420-0 to form F420-0. The polypeptide is Bifunctional F420 biosynthesis protein FbiB (Nocardia farcinica (strain IFM 10152)).